We begin with the raw amino-acid sequence, 865 residues long: MVASARVQKLVRRYKLAIATALAILLLQGLVVWSFSGLEEDEAGEKGRQRKPRPLDPGEGSKDTDSSAGRRGSTGRRHGRWRGRAESPGVPVAKVVRAVTSRQRASRRVPPAPPPEAPGRQNLSGAAAGEALVGAAGFPPHGDTGSVEGAPQPTDNGFTPKCEIVGKDALSALARASTKQCQQEIANVVCLHQAGSLMPKAVPRHCQLTGKMSPGIQWDESQAQQPMDGPPVRIAYMLVVHGRAIRQLKRLLKAVYHEQHFFYIHVDKRSNYLHREVVELAQGYDNVRVTPWRMVTIWGGASLLTMYLRSMRDLLEVPGWAWDFFINLSATDYPTRTNEELVAFLSKNRDKNFLKSHGRDNSRFIKKQGLDRLFHECDSHMWRLGERQIPAGIVVDGGSDWFVLTRSFVEYVVYTDDPLVAQLRQFYTYTLLPAESFFHTVLENSLACETLVDNNLRVTNWNRKLGCKCQYKHIVDWCGCSPNDFKPQDFLRLQQVSRPTFFARKFESTVNQEVLEILDFHLYGSYPPGTPALKAYWENTYDAADGPSGLSDVMLTAYTAFARLSLHHAATAAPPMGTPLCRFEPRGLPSSVHLYFYDDHFQGYLVTQAAQPSAQGPAEMLEMWLMPQGSLKLLGRSDQASRLQSLEVGTDWDPKERLFRNFGGLLGPLDEPVAVQRWARGPNLTATVVWIDPTYVVATSYDITVDTETEVTQYKPPLSRPLRPGPWTVRLLQFWEPLGETRFLVLPLTFNRKLPLRKDDASWLHAGPPHNEYMEQSFQGLSSILNLPQPELAEEAAQRHTQLTGPALEAWTDRELSSFWSVAGLCAIGPSPCPSLEPCRLTSWSSLSPDPKSELGPVKADGRLR.

The Cytoplasmic segment spans residues 1 to 15 (MVASARVQKLVRRYK). The helical; Signal-anchor for type II membrane protein transmembrane segment at 16–36 (LAIATALAILLLQGLVVWSFS) threads the bilayer. Residues 37–865 (GLEEDEAGEK…GPVKADGRLR (829 aa)) lie on the Lumenal side of the membrane. Residues 41-157 (DEAGEKGRQR…EGAPQPTDNG (117 aa)) are disordered. Residues 53 to 65 (RPLDPGEGSKDTD) show a composition bias toward basic and acidic residues. The segment covering 73–82 (STGRRHGRWR) has biased composition (basic residues). Asn122 is a glycosylation site (N-linked (GlcNAc...) asparagine). Residues 125–137 (GAAAGEALVGAAG) are compositionally biased toward low complexity. Intrachain disulfides connect Cys162–Cys190, Cys206–Cys448, Cys467–Cys480, and Cys469–Cys478. UDP-alpha-D-xylose is bound by residues Val239, Asp267, and 296 to 298 (TIW). Asn327 is a glycosylation site (N-linked (GlcNAc...) asparagine). A UDP-alpha-D-xylose-binding site is contributed by 400 to 401 (DW). UDP-alpha-D-xylose is bound by residues Ser481 and 504–505 (RK). Cystine bridges form between Cys581-Cys833 and Cys826-Cys839. An N-linked (GlcNAc...) asparagine glycan is attached at Asn683. The segment at 846 to 865 (SLSPDPKSELGPVKADGRLR) is disordered.

Belongs to the glycosyltransferase 14 family. XylT subfamily. Monomer. Mg(2+) serves as cofactor. The cofactor is Mn(2+). In terms of processing, contains disulfide bonds.

Its subcellular location is the golgi apparatus membrane. The protein resides in the secreted. It catalyses the reaction UDP-alpha-D-xylose + L-seryl-[protein] = 3-O-(beta-D-xylosyl)-L-seryl-[protein] + UDP + H(+). The protein operates within glycan metabolism; chondroitin sulfate biosynthesis. Its pathway is glycan metabolism; heparan sulfate biosynthesis. Its function is as follows. Catalyzes the first step in the biosynthesis of chondroitin sulfate, heparan sulfate and dermatan sulfate proteoglycans, such as DCN. Transfers D-xylose from UDP-D-xylose to specific serine residues of the core protein. The polypeptide is Xylosyltransferase 2 (XYLT2) (Pan troglodytes (Chimpanzee)).